The primary structure comprises 620 residues: Protein NRT1/ PTR FAMILY 2.13 (620 aa).

The segment at 1 to 32 (MVLEDRKDGSSLPGRSGSFSKSSPSELDVVDP) is disordered. Low complexity predominate over residues 10–25 (SSLPGRSGSFSKSSPS). Helical transmembrane passes span 70–90 (LGSIGLLANFMVYLTKVFHLE), 95–115 (ANVINIWSGFTNLTPLVGAYI), 126–146 (IAFASFATLLGLITITLTASF), 167–187 (KLQIGVLLLGLCFLSVGSGGI), 213–233 (FFNWYYMTFTVVLIITQTVVV), 241–261 (WIIGFSIPTGLMALAVVMFFA), 364–384 (IVPIWSAGIISLAAMTTQGTF), 402–422 (IPAGSLSVISLLTIGIFLPFY), 443–463 (LQRIGTGIVFAIFSMIVAGIV), 485–505 (VFWLSPQLILMGLCEAFNIIG), 524–544 (SLFSLSFAGSSYLSSFLVTVV), and 568–588 (YFYYLIAVLGVVNLVYFWYCA).

Belongs to the major facilitator superfamily. Proton-dependent oligopeptide transporter (POT/PTR) (TC 2.A.17) family. Interacts with NLA. In terms of processing, ubiquitinated by NLA. Ubiquitination of NPF2.13 leads to its degradation by the proteasome. As to expression, expressed in leaves and flowers. Detected in stems and siliques. Highest expression in the distal lamina of older leaves. Restricted to the sieve element and companion cell complex of the minor vein.

The protein resides in the cell membrane. Its function is as follows. Low-affinity proton-dependent nitrate transporter. Not involved in dipeptides transport, but has a weak glucosinolate transport activity. Involved in phloem loading and nitrate remobilization from the older leaves to other tissues. In Arabidopsis thaliana (Mouse-ear cress), this protein is Protein NRT1/ PTR FAMILY 2.13 (NPF2.13).